Reading from the N-terminus, the 586-residue chain is Kelch-like protein 7 (586 aa).

The 68-residue stretch at 44–111 (CDVILMVQER…AYTARISVNS (68 aa)) folds into the BTB domain. Positions 146 to 248 (CLGISVLAEC…SKNFLSKTVQ (103 aa)) constitute a BACK domain. Kelch repeat units lie at residues 294–336 (RIAL…FWDN), 337–382 (VVYI…AAEG), 383–430 (KIYT…EANG), 431–481 (LIYV…FVKD), 483–528 (IFAV…AVGS), and 530–575 (VYVL…CVVD).

Homodimer. Component of the BCR(KLHL7) E3 ubiquitin ligase complex.

It localises to the nucleus. The protein resides in the cytoplasm. Its pathway is protein modification; protein ubiquitination. Functionally, substrate-specific adapter of a BCR (BTB-CUL3-RBX1) E3 ubiquitin ligase complex. The BCR(KLHL7) complex acts by mediating ubiquitination and subsequent degradation of substrate proteins. Probably mediates 'Lys-48'-linked ubiquitination. This is Kelch-like protein 7 (KLHL7) from Gallus gallus (Chicken).